We begin with the raw amino-acid sequence, 423 residues long: Glucoside xylosyltransferase 2 (423 aa).

The Cytoplasmic segment spans residues Met-1–Lys-6. The chain crosses the membrane as a helical; Signal-anchor for type II membrane protein span at residues Phe-7–Gly-26. Topologically, residues Asn-27 to Val-423 are lumenal. Positions Arg-60–Pro-85 are disordered. Asn-215 and Asn-256 each carry an N-linked (GlcNAc...) asparagine glycan.

It belongs to the glycosyltransferase 8 family.

The protein localises to the membrane. The enzyme catalyses 3-O-(beta-D-glucosyl)-L-seryl-[EGF-like domain protein] + UDP-alpha-D-xylose = 3-O-[alpha-D-xylosyl-(1-&gt;3)-beta-D-glucosyl]-L-seryl-[EGF-like domain protein] + UDP + H(+). Its function is as follows. Glycosyltransferase which elongates the O-linked glucose attached to EGF-like repeats in the extracellular domain of Notch proteins by catalyzing the addition of xylose. The polypeptide is Glucoside xylosyltransferase 2 (gxylt2) (Xenopus laevis (African clawed frog)).